The primary structure comprises 409 residues: Elongation factor Tu, chloroplastic (409 aa).

The region spanning 10–214 (KPHINIGTIG…AVDAYIPTPE (205 aa)) is the tr-type G domain. The tract at residues 19 to 26 (GHVDHGKT) is G1. 19–26 (GHVDHGKT) is a binding site for GTP. Threonine 26 serves as a coordination point for Mg(2+). Residues 60-64 (GITIN) are G2. A G3 region spans residues 81 to 84 (DCPG). GTP-binding positions include 81 to 85 (DCPGH) and 136 to 139 (NKQD). The segment at 136-139 (NKQD) is G4. The interval 174 to 176 (SRL) is G5.

It belongs to the TRAFAC class translation factor GTPase superfamily. Classic translation factor GTPase family. EF-Tu/EF-1A subfamily.

The protein localises to the plastid. The protein resides in the chloroplast. The enzyme catalyses GTP + H2O = GDP + phosphate + H(+). In terms of biological role, GTP hydrolase that promotes the GTP-dependent binding of aminoacyl-tRNA to the A-site of ribosomes during protein biosynthesis. The sequence is that of Elongation factor Tu, chloroplastic (tufA) from Stephanocyclus meneghinianus (Diatom).